Consider the following 435-residue polypeptide: Pregnancy-specific beta-1-glycoprotein 6 (435 aa).

The N-terminal stretch at 1–34 (MGPLSAPPCTQHITWKGLLLTASLLNFWNLPTTA) is a signal peptide. The Ig-like V-type domain occupies 35–143 (QVIIEAKPPK…TGYFTVTLYS (109 aa)). N-linked (GlcNAc...) asparagine glycosylation is found at N61, N103, and N110. The Cell attachment site motif lies at 126-128 (RGD). Ig-like C2-type domains lie at 148 to 233 (PSIS…VTLN), 241 to 326 (PYIT…VTLN), and 334 to 405 (PRIY…KEIS). Cystine bridges form between C168–C216, C261–C309, and C353–C393. 4 N-linked (GlcNAc...) asparagine glycosylation sites follow: N198, N267, N302, and N386.

This sequence belongs to the immunoglobulin superfamily. CEA family.

Its subcellular location is the secreted. The chain is Pregnancy-specific beta-1-glycoprotein 6 (PSG6) from Homo sapiens (Human).